The primary structure comprises 416 residues: Cotranscriptional regulator ARB2A (416 aa).

The signal sequence occupies residues 1-18 (MSISLSSLILLPIWINMA). The interval 208–247 (KPKIHVQSSSDSSDEPAEKRERKDKVSKETKKRRDFYEKY) is disordered. Positions 223-236 (PAEKRERKDKVSKE) are enriched in basic and acidic residues. Serine 293 acts as the Nucleophile in catalysis. The short motif at 413 to 416 (HEEL) is the Prevents secretion from ER element.

It belongs to the ARB2A family. Interacts with AGO2. Found in a complex, composed of AGO2, CHD7 and ARB2A.

It localises to the nucleus. It is found in the cytoplasm. The protein resides in the endoplasmic reticulum. Functionally, plays a role in the regulation of alternative splicing, by interacting with AGO2 and CHD7. Seems to be required for stabilizing protein-protein interactions at the chromatin-spliceosome interface. May have hydrolase activity. In Homo sapiens (Human), this protein is Cotranscriptional regulator ARB2A.